Reading from the N-terminus, the 364-residue chain is Aminomethyltransferase (364 aa).

The protein belongs to the GcvT family. In terms of assembly, the glycine cleavage system is composed of four proteins: P, T, L and H.

It catalyses the reaction N(6)-[(R)-S(8)-aminomethyldihydrolipoyl]-L-lysyl-[protein] + (6S)-5,6,7,8-tetrahydrofolate = N(6)-[(R)-dihydrolipoyl]-L-lysyl-[protein] + (6R)-5,10-methylene-5,6,7,8-tetrahydrofolate + NH4(+). The glycine cleavage system catalyzes the degradation of glycine. In Thermotoga maritima (strain ATCC 43589 / DSM 3109 / JCM 10099 / NBRC 100826 / MSB8), this protein is Aminomethyltransferase.